We begin with the raw amino-acid sequence, 216 residues long: Probable GTP-binding protein EngB (216 aa).

The EngB-type G domain maps to 21–192 (DAPQIALAGR…WRELRALAAG (172 aa)). GTP-binding positions include 29–36 (GRSNVGKS), 56–60 (GKTRS), 75–78 (DLPG), 142–145 (TKGD), and 170–173 (VTAS). 2 residues coordinate Mg(2+): Ser-36 and Thr-58. Residues 195–216 (SADDEAEDAPSDTIDAIDDVTA) are disordered. Residues 196–216 (ADDEAEDAPSDTIDAIDDVTA) are compositionally biased toward acidic residues.

The protein belongs to the TRAFAC class TrmE-Era-EngA-EngB-Septin-like GTPase superfamily. EngB GTPase family. Mg(2+) serves as cofactor.

Necessary for normal cell division and for the maintenance of normal septation. This chain is Probable GTP-binding protein EngB, found in Nitratidesulfovibrio vulgaris (strain DP4) (Desulfovibrio vulgaris).